Reading from the N-terminus, the 119-residue chain is MNLLIDKITKDQLRSDIPEFRAGDTVRVHAKVVEGDHERIQLFEGVVIKRHGSGISATYTVRKISNGVGVERTFPLHSPRVAKIEVIRHGRVRRAKLYYLRALHGKAARIKEDRRKAFK.

It belongs to the bacterial ribosomal protein bL19 family.

This protein is located at the 30S-50S ribosomal subunit interface and may play a role in the structure and function of the aminoacyl-tRNA binding site. The protein is Large ribosomal subunit protein bL19 of Pediococcus pentosaceus (strain ATCC 25745 / CCUG 21536 / LMG 10740 / 183-1w).